We begin with the raw amino-acid sequence, 413 residues long: Arginine biosynthesis bifunctional protein ArgJ, mitochondrial (413 aa).

Substrate contacts are provided by T168, K194, T205, and E292. Catalysis depends on T205, which acts as the Nucleophile.

It belongs to the ArgJ family. Heterodimer of an alpha and a beta chain. The alpha and beta chains are autoproteolytically processed from a single precursor protein within the mitochondrion.

It localises to the mitochondrion matrix. It carries out the reaction N(2)-acetyl-L-ornithine + L-glutamate = N-acetyl-L-glutamate + L-ornithine. It catalyses the reaction L-glutamate + acetyl-CoA = N-acetyl-L-glutamate + CoA + H(+). It functions in the pathway amino-acid biosynthesis; L-arginine biosynthesis; L-ornithine and N-acetyl-L-glutamate from L-glutamate and N(2)-acetyl-L-ornithine (cyclic): step 1/1. Its pathway is amino-acid biosynthesis; L-arginine biosynthesis; N(2)-acetyl-L-ornithine from L-glutamate: step 1/4. Catalyzes two activities which are involved in the cyclic version of arginine biosynthesis: the synthesis of acetylglutamate from glutamate and acetyl-CoA, and of ornithine by transacetylation between acetylornithine and glutamate. The polypeptide is Arginine biosynthesis bifunctional protein ArgJ, mitochondrial (Clavispora lusitaniae (strain ATCC 42720) (Yeast)).